The chain runs to 228 residues: Prolactin (228 aa).

The signal sequence occupies residues 1–29 (MCPKGSSVKGSLLLLLLMSSRFLFKAVES). A disulfide bridge links Cys33 with Cys40. 3 positions are modified to phosphoserine: Ser55, Ser63, and Ser119. 2 disulfide bridges follow: Cys87-Cys203 and Cys220-Cys228.

It belongs to the somatotropin/prolactin family. As to quaternary structure, interacts with PRLR.

The protein resides in the secreted. Its function is as follows. Prolactin acts primarily on the mammary gland by promoting lactation. In Monodelphis domestica (Gray short-tailed opossum), this protein is Prolactin (PRL).